Here is a 75-residue protein sequence, read N- to C-terminus: Putative DNA-directed RNA polymerase subunit omega (75 aa).

This sequence belongs to the RNA polymerase subunit omega family.

Its subcellular location is the plastid. The protein localises to the chloroplast. The enzyme catalyses RNA(n) + a ribonucleoside 5'-triphosphate = RNA(n+1) + diphosphate. Its function is as follows. May be involved in RNA polymerase activity. The polypeptide is Putative DNA-directed RNA polymerase subunit omega (rpoZ) (Mesostigma viride (Green alga)).